The chain runs to 35 residues: ANNFDLMYEQVKFYGEVTQQMLKVSVLEMDGQFDR.

It belongs to the phosphoribulokinase family.

The protein resides in the plastid. It is found in the chloroplast. The catalysed reaction is D-ribulose 5-phosphate + ATP = D-ribulose 1,5-bisphosphate + ADP + H(+). It functions in the pathway carbohydrate biosynthesis; Calvin cycle. Light regulated via thioredoxin by reversible oxidation/reduction of sulfhydryl/disulfide groups. The polypeptide is Phosphoribulokinase (Pinus pinaster (Maritime pine)).